The sequence spans 336 residues: UPF0324 membrane protein spr0034 (336 aa).

A run of 8 helical transmembrane segments spans residues 65–84 (LLQY…QVFA), 91–113 (PVIL…FFAL), 118–140 (ATLV…APVI), 153–175 (VIFF…LHLS), 211–233 (SATI…LSYW), 249–271 (VFPL…TSLG), 286–305 (FLIV…VAMV), and 312–334 (ILLG…TLIG).

Belongs to the UPF0324 family.

It localises to the cell membrane. This is UPF0324 membrane protein spr0034 from Streptococcus pneumoniae (strain ATCC BAA-255 / R6).